We begin with the raw amino-acid sequence, 299 residues long: Leucine zipper transcription factor-like protein 1 (299 aa).

Residues 96–296 (LKLQTDISEL…DLRKRLAKYE (201 aa)) adopt a coiled-coil conformation. Residues 145–299 (GAAELLNKEI…KRLAKYEPED (155 aa)) form an interaction with BSS9 region.

Belongs to the LZTFL1 family. As to quaternary structure, self-associates. Interacts with BBS9; the interaction mediates the association of LZTL1 with the BBsome complex and regulates BBSome ciliary trafficking.

It is found in the cytoplasm. Functionally, regulates ciliary localization of the BBSome complex. Together with the BBSome complex, controls SMO ciliary trafficking and contributes to the sonic hedgehog (SHH) pathway regulation. May play a role in neurite outgrowth. May have tumor suppressor function. This chain is Leucine zipper transcription factor-like protein 1 (LZTFL1), found in Bos taurus (Bovine).